Here is a 66-residue protein sequence, read N- to C-terminus: Repressor protein C4 (66 aa).

Repressor of the ant/reb gene. The chain is Repressor protein C4 (C4) from Escherichia phage P1 (Bacteriophage P1).